Consider the following 246-residue polypeptide: Sec-independent protein translocase protein TatB (246 aa).

The chain crosses the membrane as a helical span at residues M1–G21. Disordered regions lie at residues S94–V122, S179–T204, and V225–A246. Composition is skewed to polar residues over residues Q97–P112 and P187–E197.

It belongs to the TatB family. The Tat system comprises two distinct complexes: a TatABC complex, containing multiple copies of TatA, TatB and TatC subunits, and a separate TatA complex, containing only TatA subunits. Substrates initially bind to the TatABC complex, which probably triggers association of the separate TatA complex to form the active translocon.

It localises to the cell inner membrane. Functionally, part of the twin-arginine translocation (Tat) system that transports large folded proteins containing a characteristic twin-arginine motif in their signal peptide across membranes. Together with TatC, TatB is part of a receptor directly interacting with Tat signal peptides. TatB may form an oligomeric binding site that transiently accommodates folded Tat precursor proteins before their translocation. The polypeptide is Sec-independent protein translocase protein TatB (Agrobacterium fabrum (strain C58 / ATCC 33970) (Agrobacterium tumefaciens (strain C58))).